Reading from the N-terminus, the 379-residue chain is PqqA peptide cyclase (379 aa).

A Radical SAM core domain is found at 8–220 (LPAPIGLLAE…IRVVEEARER (213 aa)). Positions 22, 26, and 29 each coordinate [4Fe-4S] cluster.

Belongs to the radical SAM superfamily. PqqE family. Interacts with PqqD. The interaction is necessary for activity of PqqE. It depends on [4Fe-4S] cluster as a cofactor.

The catalysed reaction is [PQQ precursor protein] + S-adenosyl-L-methionine = E-Y cross-linked-[PQQ precursor protein] + 5'-deoxyadenosine + L-methionine + H(+). It functions in the pathway cofactor biosynthesis; pyrroloquinoline quinone biosynthesis. Catalyzes the cross-linking of a glutamate residue and a tyrosine residue in the PqqA protein as part of the biosynthesis of pyrroloquinoline quinone (PQQ). The polypeptide is PqqA peptide cyclase (Methylobacterium sp. (strain 4-46)).